The chain runs to 933 residues: Valine--tRNA ligase (933 aa).

The 'HIGH' region signature appears at 58–68; the sequence is PNVTGSLHMGH. Residues 556–560 carry the 'KMSKS' region motif; the sequence is KMSKS. Lysine 559 is a binding site for ATP. 2 coiled-coil regions span residues 807 to 833 and 864 to 933; these read VTKN…ANKV and EGLV…LGLK.

The protein belongs to the class-I aminoacyl-tRNA synthetase family. ValS type 1 subfamily. Monomer.

It localises to the cytoplasm. It catalyses the reaction tRNA(Val) + L-valine + ATP = L-valyl-tRNA(Val) + AMP + diphosphate. Catalyzes the attachment of valine to tRNA(Val). As ValRS can inadvertently accommodate and process structurally similar amino acids such as threonine, to avoid such errors, it has a 'posttransfer' editing activity that hydrolyzes mischarged Thr-tRNA(Val) in a tRNA-dependent manner. The polypeptide is Valine--tRNA ligase (Prochlorococcus marinus (strain SARG / CCMP1375 / SS120)).